Consider the following 192-residue polypeptide: MVVGLFGGSFNPPHQGHALVAEIAIKRLGLDQLWWMVTPGNPLKSRNQLAPLAERIAESERVAADPRIKVTAFEQALGVSYTANTLARIKARNSHVHFIWIMGADSLQTFHKWQKWQEIARTFPIAVVDRPGATLSYLSSKMTRTFDFARVDEDDARILWRKSAPAWTFIHGPRSGLSSTAIRNGAVPGAVK.

It belongs to the NadD family.

The enzyme catalyses nicotinate beta-D-ribonucleotide + ATP + H(+) = deamido-NAD(+) + diphosphate. Its pathway is cofactor biosynthesis; NAD(+) biosynthesis; deamido-NAD(+) from nicotinate D-ribonucleotide: step 1/1. Its function is as follows. Catalyzes the reversible adenylation of nicotinate mononucleotide (NaMN) to nicotinic acid adenine dinucleotide (NaAD). This Rhizobium etli (strain CIAT 652) protein is Probable nicotinate-nucleotide adenylyltransferase.